Reading from the N-terminus, the 375-residue chain is Anhydro-N-acetylmuramic acid kinase (375 aa).

12 to 19 (GTSLDGVD) is an ATP binding site.

It belongs to the anhydro-N-acetylmuramic acid kinase family.

The catalysed reaction is 1,6-anhydro-N-acetyl-beta-muramate + ATP + H2O = N-acetyl-D-muramate 6-phosphate + ADP + H(+). Its pathway is amino-sugar metabolism; 1,6-anhydro-N-acetylmuramate degradation. The protein operates within cell wall biogenesis; peptidoglycan recycling. Catalyzes the specific phosphorylation of 1,6-anhydro-N-acetylmuramic acid (anhMurNAc) with the simultaneous cleavage of the 1,6-anhydro ring, generating MurNAc-6-P. Is required for the utilization of anhMurNAc either imported from the medium or derived from its own cell wall murein, and thus plays a role in cell wall recycling. In Variovorax paradoxus (strain S110), this protein is Anhydro-N-acetylmuramic acid kinase.